Here is a 450-residue protein sequence, read N- to C-terminus: uncharacterized protein (450 aa).

One can recognise a TRAM domain in the interval 1-58 (MQKNQIVDLEITDLSYEAMGVAHLDGMTVFVNNALPGEIVSAKLLKVKKNFAFAKIEK). Residues Q280, Y309, E330, and D378 each contribute to the S-adenosyl-L-methionine site. The active-site Nucleophile is the C405.

It belongs to the class I-like SAM-binding methyltransferase superfamily. RNA M5U methyltransferase family.

This is an uncharacterized protein from Lactobacillus johnsonii (strain CNCM I-12250 / La1 / NCC 533).